Consider the following 80-residue polypeptide: Metallothionein-like protein type 2 MET1 (80 aa).

Belongs to the metallothionein superfamily. Type 15 family.

Its function is as follows. Metallothioneins have a high content of cysteine residues that bind various heavy metals. The sequence is that of Metallothionein-like protein type 2 MET1 (MET1) from Fragaria ananassa (Strawberry).